The chain runs to 444 residues: Tubulin beta-2 chain (444 aa).

Gln-11, Glu-69, Ser-138, Gly-142, Thr-143, Gly-144, Asn-204, and Asn-226 together coordinate GTP. Mg(2+) is bound at residue Glu-69. The interval Tyr-422–Asp-444 is disordered. Positions Thr-429–Asp-444 are enriched in acidic residues.

It belongs to the tubulin family. As to quaternary structure, dimer of alpha and beta chains. A typical microtubule is a hollow water-filled tube with an outer diameter of 25 nm and an inner diameter of 15 nM. Alpha-beta heterodimers associate head-to-tail to form protofilaments running lengthwise along the microtubule wall with the beta-tubulin subunit facing the microtubule plus end conferring a structural polarity. Microtubules usually have 13 protofilaments but different protofilament numbers can be found in some organisms and specialized cells. Mg(2+) is required as a cofactor. In terms of tissue distribution, found in areas of rapidly dividing tissues.

The protein resides in the cytoplasm. It localises to the cytoskeleton. Functionally, tubulin is the major constituent of microtubules, a cylinder consisting of laterally associated linear protofilaments composed of alpha- and beta-tubulin heterodimers. Microtubules grow by the addition of GTP-tubulin dimers to the microtubule end, where a stabilizing cap forms. Below the cap, tubulin dimers are in GDP-bound state, owing to GTPase activity of alpha-tubulin. This is Tubulin beta-2 chain (TUBB2) from Daucus carota (Wild carrot).